A 216-amino-acid polypeptide reads, in one-letter code: Large ribosomal subunit protein uL3 (216 aa).

The interval 137–158 (GASHGAHKNHRKPGSIGGASTP) is disordered.

The protein belongs to the universal ribosomal protein uL3 family. Part of the 50S ribosomal subunit. Forms a cluster with proteins L14 and L19.

Functionally, one of the primary rRNA binding proteins, it binds directly near the 3'-end of the 23S rRNA, where it nucleates assembly of the 50S subunit. This chain is Large ribosomal subunit protein uL3, found in Arthrobacter sp. (strain FB24).